The sequence spans 88 residues: Phosphocarrier protein HPr (88 aa).

In terms of domain architecture, HPr spans Met1–Ile88. The Pros-phosphohistidine intermediate role is filled by His15. Position 47 is a phosphoserine; by HPrK/P (Ser47).

Belongs to the HPr family.

The protein resides in the cytoplasm. With respect to regulation, phosphorylation on Ser-47 inhibits the phosphoryl transfer from enzyme I to HPr. In terms of biological role, general (non sugar-specific) component of the phosphoenolpyruvate-dependent sugar phosphotransferase system (sugar PTS). This major carbohydrate active-transport system catalyzes the phosphorylation of incoming sugar substrates concomitantly with their translocation across the cell membrane. The phosphoryl group from phosphoenolpyruvate (PEP) is transferred to the phosphoryl carrier protein HPr by enzyme I. Phospho-HPr then transfers it to the PTS EIIA domain. P-Ser-HPr interacts with the catabolite control protein A (CcpA), forming a complex that binds to DNA at the catabolite response elements cre, operator sites preceding a large number of catabolite-regulated genes. Thus, P-Ser-HPr is a corepressor in carbon catabolite repression (CCR), a mechanism that allows bacteria to coordinate and optimize the utilization of available carbon sources. P-Ser-HPr also plays a role in inducer exclusion, in which it probably interacts with several non-PTS permeases and inhibits their transport activity. The protein is Phosphocarrier protein HPr (ptsH) of Mycoplasma pneumoniae (strain ATCC 29342 / M129 / Subtype 1) (Mycoplasmoides pneumoniae).